Consider the following 138-residue polypeptide: ATP synthase epsilon chain, chloroplastic (138 aa).

The protein belongs to the ATPase epsilon chain family. As to quaternary structure, F-type ATPases have 2 components, CF(1) - the catalytic core - and CF(0) - the membrane proton channel. CF(1) has five subunits: alpha(3), beta(3), gamma(1), delta(1), epsilon(1). CF(0) has three main subunits: a, b and c.

The protein resides in the plastid. Its subcellular location is the chloroplast thylakoid membrane. Functionally, produces ATP from ADP in the presence of a proton gradient across the membrane. The polypeptide is ATP synthase epsilon chain, chloroplastic (Huperzia lucidula (Shining clubmoss)).